The chain runs to 715 residues: Polyribonucleotide nucleotidyltransferase (715 aa).

Mg(2+) contacts are provided by Asp-488 and Asp-494. Positions 555–614 (PRIEVMHIPTDKIRDVIGSGGKVIREIVEKTGAKINIEDDGTVKIASSNAKEIEAAKKWI) constitute a KH domain. Residues 624 to 692 (GEIYEGTVVK…ERGKVRLSMK (69 aa)) form the S1 motif domain.

The protein belongs to the polyribonucleotide nucleotidyltransferase family. It depends on Mg(2+) as a cofactor.

The protein localises to the cytoplasm. The enzyme catalyses RNA(n+1) + phosphate = RNA(n) + a ribonucleoside 5'-diphosphate. Its function is as follows. Involved in mRNA degradation. Catalyzes the phosphorolysis of single-stranded polyribonucleotides processively in the 3'- to 5'-direction. This is Polyribonucleotide nucleotidyltransferase from Mesorhizobium japonicum (strain LMG 29417 / CECT 9101 / MAFF 303099) (Mesorhizobium loti (strain MAFF 303099)).